Reading from the N-terminus, the 887-residue chain is DNA gyrase subunit A (887 aa).

One can recognise a Topo IIA-type catalytic domain in the interval 35 to 501 (LPDVRDGLKP…GFENLEDEDL (467 aa)). Catalysis depends on Tyr123, which acts as the O-(5'-phospho-DNA)-tyrosine intermediate. The short motif at 528-534 (QNRGGRG) is the GyrA-box element. Positions 811-864 (KEDAEDETNEDEQSTSTVSEDGTEQQREAVVNDETPGNAIHTEVIDSEENDEDG) are disordered. Residues 813–823 (DAEDETNEDEQ) are compositionally biased toward acidic residues.

Belongs to the type II topoisomerase GyrA/ParC subunit family. Heterotetramer, composed of two GyrA and two GyrB chains. In the heterotetramer, GyrA contains the active site tyrosine that forms a transient covalent intermediate with DNA, while GyrB binds cofactors and catalyzes ATP hydrolysis.

Its subcellular location is the cytoplasm. It catalyses the reaction ATP-dependent breakage, passage and rejoining of double-stranded DNA.. A type II topoisomerase that negatively supercoils closed circular double-stranded (ds) DNA in an ATP-dependent manner to modulate DNA topology and maintain chromosomes in an underwound state. Negative supercoiling favors strand separation, and DNA replication, transcription, recombination and repair, all of which involve strand separation. Also able to catalyze the interconversion of other topological isomers of dsDNA rings, including catenanes and knotted rings. Type II topoisomerases break and join 2 DNA strands simultaneously in an ATP-dependent manner. The protein is DNA gyrase subunit A of Staphylococcus aureus (strain COL).